The chain runs to 314 residues: Cathepsin L 2 (314 aa).

Positions 1–24 (MMLLGASLYLNNTQEVSDEIDTAN) are cleaved as a signal peptide. Positions 25–109 (LYANWKMKYN…NASNANFQYK (85 aa)) are cleaved as a propeptide — activation peptide. Cystine bridges form between Cys132/Cys175, Cys166/Cys207, and Cys259/Cys302. Residue Cys135 is part of the active site. Residues His265 and Asn282 contribute to the active site.

The protein belongs to the peptidase C1 family.

The protein localises to the secreted. The enzyme catalyses Specificity close to that of papain. As compared to cathepsin B, cathepsin L exhibits higher activity toward protein substrates, but has little activity on Z-Arg-Arg-NHMec, and no peptidyl-dipeptidase activity.. May be involved in extracellular digestion. This chain is Cathepsin L 2, found in Paramecium tetraurelia.